We begin with the raw amino-acid sequence, 408 residues long: Peptidase T (408 aa).

Zn(2+) is bound at residue H78. Residue D80 is part of the active site. Residue D140 participates in Zn(2+) binding. The active-site Proton acceptor is the E173. Residues E174, D196, and H379 each contribute to the Zn(2+) site.

This sequence belongs to the peptidase M20B family. It depends on Zn(2+) as a cofactor.

The protein resides in the cytoplasm. It carries out the reaction Release of the N-terminal residue from a tripeptide.. Its function is as follows. Cleaves the N-terminal amino acid of tripeptides. This Escherichia coli (strain K12 / MC4100 / BW2952) protein is Peptidase T.